The primary structure comprises 105 residues: Met repressor (105 aa).

The protein belongs to the MetJ family. As to quaternary structure, homodimer.

It is found in the cytoplasm. This regulatory protein, when combined with SAM (S-adenosylmethionine) represses the expression of the methionine regulon and of enzymes involved in SAM synthesis. The sequence is that of Met repressor from Pasteurella multocida (strain Pm70).